A 189-amino-acid chain; its full sequence is Casparian strip membrane protein 1 (189 aa).

The Cytoplasmic portion of the chain corresponds to 1–25 (MMQAESGSAEAKGPLPPPVGRKRRG). The helical transmembrane segment at 26–46 (LGILDFLLRLLAIGATLSAAI) threads the bilayer. Over 47-73 (TMGTTNETLQFFTQFFQFKARFYDLSA) the chain is Extracellular. A glycan (N-linked (GlcNAc...) asparagine) is linked at Asn-52. A helical transmembrane segment spans residues 74 to 94 (FIYFVIANAIVGGYLLLSLPI). Over 95–108 (SILNIVRPRAASSR) the chain is Cytoplasmic. The helical transmembrane segment at 109 to 129 (VFLIFFDTVMVAVCTSGAAAA) threads the bilayer. The Extracellular segment spans residues 130-158 (VAILYVARKGNSRTNWFAICQRFNSFCNQ). Residues 159-179 (AIGAVSASFAGVVFLILLVLL) traverse the membrane as a helical segment. The Cytoplasmic segment spans residues 180-189 (SASTLYRRRP).

This sequence belongs to the Casparian strip membrane proteins (CASP) family. In terms of assembly, homodimer and heterodimers.

The protein resides in the cell membrane. Regulates membrane-cell wall junctions and localized cell wall deposition. Required for establishment of the Casparian strip membrane domain (CSD) and the subsequent formation of Casparian strips, a cell wall modification of the root endodermis that determines an apoplastic barrier between the intraorganismal apoplasm and the extraorganismal apoplasm and prevents lateral diffusion. This Picea glauca (White spruce) protein is Casparian strip membrane protein 1.